The chain runs to 520 residues: NAD(P)H-quinone oxidoreductase subunit 2 (520 aa).

The next 14 membrane-spanning stretches (helical) occupy residues 15–35, 42–62, 79–99, 106–126, 132–152, 167–187, 210–230, 244–264, 280–300, 306–326, 334–354, 378–398, 400–420, and 466–486; these read ILPE…DLIL, WIGY…YFQW, LSII…LMSI, GTAL…GMFV, LVMI…LTGY, LLIG…LYGL, LGAV…ISAA, PTPV…ALAI, FVFT…ALAQ, MLAY…IAGT, IFYL…IILF, LGLS…GFFG, IYLF…LGLV, and VGLV…NPLF.

It belongs to the complex I subunit 2 family. In terms of assembly, NDH-1 can be composed of about 15 different subunits; different subcomplexes with different compositions have been identified which probably have different functions.

It is found in the cellular thylakoid membrane. The enzyme catalyses a plastoquinone + NADH + (n+1) H(+)(in) = a plastoquinol + NAD(+) + n H(+)(out). It catalyses the reaction a plastoquinone + NADPH + (n+1) H(+)(in) = a plastoquinol + NADP(+) + n H(+)(out). NDH-1 shuttles electrons from an unknown electron donor, via FMN and iron-sulfur (Fe-S) centers, to quinones in the respiratory and/or the photosynthetic chain. The immediate electron acceptor for the enzyme in this species is believed to be plastoquinone. Couples the redox reaction to proton translocation, and thus conserves the redox energy in a proton gradient. Cyanobacterial NDH-1 also plays a role in inorganic carbon-concentration. The chain is NAD(P)H-quinone oxidoreductase subunit 2 from Nostoc sp. (strain PCC 7120 / SAG 25.82 / UTEX 2576).